The chain runs to 422 residues: Serine hydroxymethyltransferase (422 aa).

(6S)-5,6,7,8-tetrahydrofolate contacts are provided by residues Leu-118 and 122 to 124; that span reads GHL. At Lys-227 the chain carries N6-(pyridoxal phosphate)lysine. Residue Glu-242 participates in (6S)-5,6,7,8-tetrahydrofolate binding.

It belongs to the SHMT family. Homodimer. Requires pyridoxal 5'-phosphate as cofactor.

It is found in the cytoplasm. It catalyses the reaction (6R)-5,10-methylene-5,6,7,8-tetrahydrofolate + glycine + H2O = (6S)-5,6,7,8-tetrahydrofolate + L-serine. The protein operates within one-carbon metabolism; tetrahydrofolate interconversion. It functions in the pathway amino-acid biosynthesis; glycine biosynthesis; glycine from L-serine: step 1/1. Its function is as follows. Catalyzes the reversible interconversion of serine and glycine with tetrahydrofolate (THF) serving as the one-carbon carrier. This reaction serves as the major source of one-carbon groups required for the biosynthesis of purines, thymidylate, methionine, and other important biomolecules. Also exhibits THF-independent aldolase activity toward beta-hydroxyamino acids, producing glycine and aldehydes, via a retro-aldol mechanism. This is Serine hydroxymethyltransferase from Sulfurihydrogenibium sp. (strain YO3AOP1).